A 205-amino-acid chain; its full sequence is Troponin I, cardiac muscle (205 aa).

The disordered stretch occupies residues 1 to 38 (MADQSGNAAPPPVRRRSSANYRAYATEPHAKKKSKISA). The residue at position 2 (alanine 2) is an N-acetylalanine. Serine 5 is modified (phosphoserine). A phosphoserine; by PKA and PKD/PRKD1 mark is found at serine 17 and serine 18. Tyrosine 21 bears the Phosphotyrosine mark. Threonine 26 is modified (phosphothreonine; by STK4/MST1). The involved in binding TNC stretch occupies residues 27–74 (EPHAKKKSKISASRKLQLKTLMLQIAKQELEREAVERRGEKGRALSTR). Phosphoserine; by PKC/PRKCE is present on residues serine 37 and serine 39. Threonine 46 carries the post-translational modification Phosphothreonine; by STK4/MST1. Position 72 is a phosphoserine (serine 72). At threonine 73 the chain carries Phosphothreonine. Positions 124-145 (NQKIFDLRGKFKRPTLRRVRIS) are involved in binding TNC and actin. At threonine 138 the chain carries Phosphothreonine; by STK4/MST1. Phosphoserine; by PAK3 is present on serine 145. Position 176 is a phosphothreonine (threonine 176). Serine 194 is subject to Phosphoserine.

It belongs to the troponin I family. Binds to actin and tropomyosin. Interacts with TRIM63. Interacts with STK4/MST1. Post-translationally, phosphorylated at Ser-17 and Ser-18 by PRKD1; phosphorylation reduces myofilament calcium sensitivity. Phosphorylated preferentially at Thr-26. Phosphorylation by STK4/MST1 alters its binding affinity to TNNC1 (cardiac Tn-C) and TNNT2 (cardiac Tn-T). Phosphorylated at Ser-37 and Ser-39 by PRKCE; phosphorylation increases myocardium contractile dysfunction.

Troponin I is the inhibitory subunit of troponin, the thin filament regulatory complex which confers calcium-sensitivity to striated muscle actomyosin ATPase activity. The chain is Troponin I, cardiac muscle (TNNI3) from Equus caballus (Horse).